A 437-amino-acid polypeptide reads, in one-letter code: Sorting nexin-30 (437 aa).

Positions 1-45 (MAGGPPKALPSTGPQSLRDMPHPLAGSSSEEAVGGDSTPSPDLLM) are disordered. Threonine 38 bears the Phosphothreonine mark. A Phosphoserine modification is found at serine 40. The 122-residue stretch at 89–210 (RDLFVTVDDP…VFLTAKDLNA (122 aa)) folds into the PX domain. Positions 132, 134, 162, and 176 each coordinate a 1,2-diacyl-sn-glycero-3-phospho-(1D-myo-inositol-3-phosphate). Positions 234-437 (KLRSRPLEFA…PLLQEKQETK (204 aa)) constitute a BAR domain.

Belongs to the sorting nexin family. In terms of assembly, heterodimer; heterodimerizes with SNX4.

Its subcellular location is the early endosome membrane. Involved in the regulation of endocytosis and in several stages of intracellular trafficking. Together with SNX4, involved in autophagosome assembly. In Mus musculus (Mouse), this protein is Sorting nexin-30.